Consider the following 341-residue polypeptide: MIEFRQVSKTFNKKKQKIDALKDVSFTVNRNDIFGVIGYSGAGKSTLVRLVNHLEAASNGQVIVDGHDITNYSDKMMRDIKKDIGMIFQHFNLLNSATVFKNVAMPLILSKKSKTEIKQRVTEMLEFVGLSDKKDQFPEELSGGQKQRVAIARALVTNPKILLCDEATSALDPATTASILTLLKNVNQTFGITIMMITHEMRVIKDICNRVAVMEKGQVVETGTVKEVFSHPKTTIAQNFVSTVIQTEPSTSLIRRLNDEQVGDFKDYKIFVEETQVTQPIINDLIQICGREVKILFSSMSEIQGNTVCYMWLRFNMDQQFDDTAINQYFKEKNIQFEEVH.

One can recognise an ABC transporter domain in the interval 2–241; the sequence is IEFRQVSKTF…PKTTIAQNFV (240 aa). Position 38 to 45 (38 to 45) interacts with ATP; sequence GYSGAGKS.

The protein belongs to the ABC transporter superfamily. Methionine importer (TC 3.A.1.24) family. In terms of assembly, the complex is composed of two ATP-binding proteins (MetN), two transmembrane proteins (MetI) and a solute-binding protein (MetQ).

Its subcellular location is the cell membrane. The catalysed reaction is L-methionine(out) + ATP + H2O = L-methionine(in) + ADP + phosphate + H(+). It catalyses the reaction D-methionine(out) + ATP + H2O = D-methionine(in) + ADP + phosphate + H(+). In terms of biological role, part of the ABC transporter complex MetNIQ involved in methionine import. Responsible for energy coupling to the transport system. This is Methionine import ATP-binding protein MetN 1 from Staphylococcus aureus (strain MW2).